Reading from the N-terminus, the 3241-residue chain is PHD finger protein rhinoceros (3241 aa).

The segment covering 1 to 16 (MSQRGKRGNQQHHQSH) has biased composition (basic residues). A disordered region spans residues 1–126 (MSQRGKRGNQ…GASSSSSWQA (126 aa)). Composition is skewed to low complexity over residues 42–55 (PPNGATTAAVAEVT) and 90–126 (RAAAGATSTSKSKSTKLAKSASKCKSQGASSSSSWQA). The PHD-type 1 zinc finger occupies 312 to 362 (NVICDVCRSPDSEEANEMVFCDNCNICVHQACYGITAIPSGQWLCRTCSMG). A C2HC pre-PHD-type zinc finger spans residues 364 to 398 (KPDCVLCPNKGGAMKSNKSGKHWAHVSCALWIPEV). A PHD-type 2 zinc finger spans residues 422-481 (LICVLCRKRVGSCIQCSVKPCKTAYHVTCAFQHGLEMRAIIEEGNAEDGVKLRSYCQKHS). Disordered stretches follow at residues 482 to 501 (MSKGKKENAGSHGGGSASVA), 508 to 554 (NRYG…ARAQ), 737 to 1266 (SGKQ…VATP), 1279 to 1483 (PQRQ…STKV), 1500 to 1613 (PKTN…SETR), and 1632 to 1746 (NLGA…QHLL). A compositionally biased stretch (basic and acidic residues) spans 540–554 (KTELTSEERNQARAQ). Positions 762–777 (KKLNNGILSSRTSSPE) are enriched in polar residues. Residues 807 to 874 (KSSAAAATST…SGSSSAGSGV (68 aa)) show a composition bias toward low complexity. Residues 931-943 (ERCRNRQEPERGA) are compositionally biased toward basic and acidic residues. The segment covering 949-965 (QSKSVPNRSQASRSKPT) has biased composition (polar residues). The span at 995-1007 (DADESVSSDESEE) shows a compositional bias: acidic residues. The segment covering 1019-1031 (STTTSGLATTGSA) has biased composition (low complexity). The segment covering 1060 to 1075 (TVESNVSDSQNQQTIR) has biased composition (polar residues). Residues 1087–1104 (TAATTSSTSQAASSTSKA) are compositionally biased toward low complexity. Composition is skewed to polar residues over residues 1117 to 1126 (IGNSTKTKPN) and 1151 to 1163 (NMRSTNLATTLQP). The span at 1184 to 1211 (KVKDSSSRVSNEADKSSLEKVRPKEHLQ) shows a compositional bias: basic and acidic residues. The segment covering 1313 to 1327 (VTSATISGSGSSVPA) has biased composition (polar residues). Thr1346 carries the phosphothreonine modification. Ser1352 bears the Phosphoserine mark. Residue Thr1364 is modified to Phosphothreonine. A compositionally biased stretch (low complexity) spans 1382–1426 (SSSSSGDSESSSSSSSSGSSSSSGGSDSDSESQASNSENPSSREP). Position 1456 is a phosphothreonine (Thr1456). Positions 1463-1483 (NVLNIPSTRSRQNSTTKSTKV) are enriched in polar residues. Over residues 1541–1558 (SPEKTVSRCKSRAEESPK) the composition is skewed to basic and acidic residues. The span at 1576–1594 (KGTSSLDKLLNKKQQQMNH) shows a compositional bias: polar residues. A compositionally biased stretch (pro residues) spans 1599-1608 (TPPPISPTPP). Residues 1664-1675 (TAPTRTQLSASA) show a composition bias toward polar residues. The segment covering 1688–1699 (PAAPLPASPTPT) has biased composition (pro residues). Over residues 1717–1731 (RRMRWRSRRRRRRRS) the composition is skewed to basic residues. 2 coiled-coil regions span residues 1741 to 1770 (HTQHLLNEMEMARELEEERKNELLANASKY) and 1893 to 1925 (SEEDSIQATRNLLEKLRKTKRKAQDDCSSKEAV). Disordered regions lie at residues 2037–2061 (LEKSPHQKGACPLSSNGGANVGQPA), 2124–2148 (AERRSSSPSSVSESNDPPQPPPVVT), 2203–2227 (NNTNTTQHQPTTPAHQQQQQRTPNN), 2346–2454 (TPPV…GGVT), 2598–2629 (ATGTGTSPSKQHSGPTALVAPPTGPNPTPAPN), 2667–2691 (SEEVSIDSDSTIPHSKTSTSDARSQ), 2768–2811 (NDDS…NSSS), 2832–2911 (GAGA…SVDE), 2964–3015 (NKRG…TTTM), 3042–3169 (KAET…EAAM), and 3184–3241 (VNVG…CEVR). The segment covering 2359-2381 (KRTSVSGSNLSKKQTHKSPQLPQ) has biased composition (polar residues). Residues 2392–2402 (PLQPPTPPAPV) show a composition bias toward pro residues. Residues 2430 to 2439 (GSGGSGAPGR) are compositionally biased toward gly residues. Composition is skewed to polar residues over residues 2598–2611 (ATGTGTSPSKQHSG) and 2673–2689 (DSDSTIPHSKTSTSDAR). The span at 2855-2865 (NNDNNGKTGAA) shows a compositional bias: polar residues. Residues 2876–2887 (KTLESSEDDHQA) show a composition bias toward basic and acidic residues. Phosphoserine is present on residues Ser2880 and Ser2881. Positions 2899 to 2911 (ANETPSGVSSVDE) are enriched in polar residues. Basic and acidic residues predominate over residues 2964–2974 (NKRGVVVKDGE). Over residues 2984–3002 (KRPKSSKPKKEKKEKKRQK) the composition is skewed to basic residues. The segment covering 3003–3015 (QQQLILSSSTTTM) has biased composition (low complexity). Phosphoserine occurs at positions 3104 and 3110. 2 stretches are compositionally biased toward polar residues: residues 3115–3130 (LLNSFTPHSQNANTSP) and 3184–3197 (VNVGNYENSNNSLP). Residues 3198–3218 (SASGTGSASSNSCNSNSINNN) show a composition bias toward low complexity. The segment covering 3219 to 3230 (GSGGGRASGEGG) has biased composition (gly residues).

The protein belongs to the JADE family.

It is found in the nucleus. In terms of biological role, may function as a negative regulator of the EGFR/Ras/MAPK signaling pathway during eye development. In Drosophila melanogaster (Fruit fly), this protein is PHD finger protein rhinoceros (rno).